The primary structure comprises 946 residues: Bifunctional glutamine synthetase adenylyltransferase/adenylyl-removing enzyme (946 aa).

Residues 1 to 440 (MKPLSSPLQQ…VFNELIGDDE (440 aa)) form an adenylyl removase region. An adenylyl transferase region spans residues 449 to 946 (SEQWRELWQD…ASWQKWLVEE (498 aa)).

The protein belongs to the GlnE family. Requires Mg(2+) as cofactor.

It carries out the reaction [glutamine synthetase]-O(4)-(5'-adenylyl)-L-tyrosine + phosphate = [glutamine synthetase]-L-tyrosine + ADP. The enzyme catalyses [glutamine synthetase]-L-tyrosine + ATP = [glutamine synthetase]-O(4)-(5'-adenylyl)-L-tyrosine + diphosphate. Its function is as follows. Involved in the regulation of glutamine synthetase GlnA, a key enzyme in the process to assimilate ammonia. When cellular nitrogen levels are high, the C-terminal adenylyl transferase (AT) inactivates GlnA by covalent transfer of an adenylyl group from ATP to specific tyrosine residue of GlnA, thus reducing its activity. Conversely, when nitrogen levels are low, the N-terminal adenylyl removase (AR) activates GlnA by removing the adenylyl group by phosphorolysis, increasing its activity. The regulatory region of GlnE binds the signal transduction protein PII (GlnB) which indicates the nitrogen status of the cell. This is Bifunctional glutamine synthetase adenylyltransferase/adenylyl-removing enzyme from Escherichia coli (strain SE11).